The chain runs to 272 residues: tRNA pseudouridine synthase B (272 aa).

Asp38 serves as the catalytic Nucleophile.

The protein belongs to the pseudouridine synthase TruB family. Type 1 subfamily.

It carries out the reaction uridine(55) in tRNA = pseudouridine(55) in tRNA. Functionally, responsible for synthesis of pseudouridine from uracil-55 in the psi GC loop of transfer RNAs. This is tRNA pseudouridine synthase B from Campylobacter jejuni subsp. jejuni serotype O:2 (strain ATCC 700819 / NCTC 11168).